The sequence spans 822 residues: AP-1 complex subunit gamma-1 (822 aa).

Residues 597 to 628 are disordered; sequence EIVQTNGETEPAPLETKPPPSGPQPTSQANDL. One can recognise a GAE domain in the interval 702–817; it reads AGIPSITAYS…QDLAEVNNFP (116 aa).

It belongs to the adaptor complexes large subunit family. As to quaternary structure, adaptor protein complex 1 (AP-1) is a heterotetramer composed of two large adaptins (gamma-type subunit AP1G1 and beta-type subunit AP1B1), a medium adaptin (mu-type subunit AP1M1 or AP1M2) and a small adaptin (sigma-type subunit AP1S1 or AP1S2 or AP1S3). Interacts (via GAE domain) with RABEP1. Interacts with EPS15. Interacts with SYNRG/gamma-synergin. Interacts (via GAE domain) with AP1AR (via coiled-coil domain). Interacts with CLN3 (via dileucine motif); this interaction facilitates lysosomal targeting. Interacts (via GAE domain) with AFTPH/aftiphilin; the interaction is required to recruit AFTPH/aftiphilin to the perinuclear region of the cell.

The protein localises to the golgi apparatus. Its subcellular location is the cytoplasmic vesicle. It localises to the clathrin-coated vesicle membrane. The protein resides in the cytoplasm. It is found in the perinuclear region. The protein localises to the clathrin-coated vesicle. Its subcellular location is the membrane. It localises to the clathrin-coated pit. Functionally, subunit of clathrin-associated adaptor protein complex 1 that plays a role in protein sorting in the late-Golgi/trans-Golgi network (TGN) and/or endosomes. The AP complexes mediate both the recruitment of clathrin to membranes and the recognition of sorting signals within the cytosolic tails of transmembrane cargo molecules. In association with AFTPH/aftiphilin in the aftiphilin/p200/gamma-synergin complex, involved in the trafficking of transferrin from early to recycling endosomes, and the membrane trafficking of furin and the lysosomal enzyme cathepsin D between the trans-Golgi network (TGN) and endosomes. The chain is AP-1 complex subunit gamma-1 (AP1G1) from Pongo abelii (Sumatran orangutan).